The sequence spans 366 residues: Aminomethyltransferase (366 aa).

The protein belongs to the GcvT family. As to quaternary structure, the glycine cleavage system is composed of four proteins: P, T, L and H.

It carries out the reaction N(6)-[(R)-S(8)-aminomethyldihydrolipoyl]-L-lysyl-[protein] + (6S)-5,6,7,8-tetrahydrofolate = N(6)-[(R)-dihydrolipoyl]-L-lysyl-[protein] + (6R)-5,10-methylene-5,6,7,8-tetrahydrofolate + NH4(+). In terms of biological role, the glycine cleavage system catalyzes the degradation of glycine. This chain is Aminomethyltransferase, found in Bacillus velezensis (strain DSM 23117 / BGSC 10A6 / LMG 26770 / FZB42) (Bacillus amyloliquefaciens subsp. plantarum).